The following is a 351-amino-acid chain: GTP 3',8-cyclase (351 aa).

Residues 29 to 254 (RFGRVARDLR…EHGREDPSAP (226 aa)) enclose the Radical SAM core domain. Arg-38 is a GTP binding site. Cys-45 and Cys-49 together coordinate [4Fe-4S] cluster. Tyr-51 lines the S-adenosyl-L-methionine pocket. [4Fe-4S] cluster is bound at residue Cys-52. Residue Arg-89 participates in GTP binding. Residue Gly-93 participates in S-adenosyl-L-methionine binding. Thr-120 is a GTP binding site. Ser-144 is a binding site for S-adenosyl-L-methionine. Lys-181 is a GTP binding site. Met-214 provides a ligand contact to S-adenosyl-L-methionine. [4Fe-4S] cluster is bound by residues Cys-278 and Cys-281. 283 to 285 (RTR) contributes to the GTP binding site. Residue Cys-295 participates in [4Fe-4S] cluster binding.

Belongs to the radical SAM superfamily. MoaA family. In terms of assembly, monomer and homodimer. Requires [4Fe-4S] cluster as cofactor.

The catalysed reaction is GTP + AH2 + S-adenosyl-L-methionine = (8S)-3',8-cyclo-7,8-dihydroguanosine 5'-triphosphate + 5'-deoxyadenosine + L-methionine + A + H(+). Its pathway is cofactor biosynthesis; molybdopterin biosynthesis. Its function is as follows. Catalyzes the cyclization of GTP to (8S)-3',8-cyclo-7,8-dihydroguanosine 5'-triphosphate. The polypeptide is GTP 3',8-cyclase (Rhodococcus opacus (strain B4)).